Consider the following 87-residue polypeptide: Small ribosomal subunit protein bS20 (87 aa).

Positions 1–26 (MANTAQAKKRVRQNIKQRERNSGLRS) are disordered.

The protein belongs to the bacterial ribosomal protein bS20 family.

Binds directly to 16S ribosomal RNA. The protein is Small ribosomal subunit protein bS20 of Nitrosomonas eutropha (strain DSM 101675 / C91 / Nm57).